A 458-amino-acid polypeptide reads, in one-letter code: tRNA-2-methylthio-N(6)-dimethylallyladenosine synthase (458 aa).

The region spanning 15–134 (KKVFIKTYGC…LPELLQQAQQ (120 aa)) is the MTTase N-terminal domain. [4Fe-4S] cluster contacts are provided by C24, C60, C97, C175, C179, and C182. The Radical SAM core domain maps to 161–393 (QKRGVSAFLT…QALLLDQQHR (233 aa)). Positions 396–457 (RSKIGQTTDV…SNSFVGEKAN (62 aa)) constitute a TRAM domain.

It belongs to the methylthiotransferase family. MiaB subfamily. In terms of assembly, monomer. The cofactor is [4Fe-4S] cluster.

It localises to the cytoplasm. It carries out the reaction N(6)-dimethylallyladenosine(37) in tRNA + (sulfur carrier)-SH + AH2 + 2 S-adenosyl-L-methionine = 2-methylsulfanyl-N(6)-dimethylallyladenosine(37) in tRNA + (sulfur carrier)-H + 5'-deoxyadenosine + L-methionine + A + S-adenosyl-L-homocysteine + 2 H(+). Its function is as follows. Catalyzes the methylthiolation of N6-(dimethylallyl)adenosine (i(6)A), leading to the formation of 2-methylthio-N6-(dimethylallyl)adenosine (ms(2)i(6)A) at position 37 in tRNAs that read codons beginning with uridine. The sequence is that of tRNA-2-methylthio-N(6)-dimethylallyladenosine synthase from Bartonella bacilliformis (strain ATCC 35685 / KC583 / Herrer 020/F12,63).